Consider the following 110-residue polypeptide: Small ribosomal subunit protein bS6 (110 aa).

It belongs to the bacterial ribosomal protein bS6 family.

Its function is as follows. Binds together with bS18 to 16S ribosomal RNA. The polypeptide is Small ribosomal subunit protein bS6 (rpsF) (Aquifex aeolicus (strain VF5)).